The primary structure comprises 392 residues: MKRVQNLLVAVGLSPNYHRRTYPSGKKSLVVRFYATLTPGLEDVAAKEVESFGCKVEEIRERRGRIFFSGEKSAIPLLNHFSRTLERLNVLLLRCEVEGLDDIYAAVKGLDFSFVKGKSFAIRSLRVGEHDFTSMDIARVAGQAVIDSFMESYGERLKVNLNQPDVIIRVELVDSELFVGVDTTGDDAMHKRWWRVYNHPAHLNAAIACGMLRIADWKVDESLIDPMCGSGTIPIEAALMVRNVPNLRDFAYKKLCEWELAFEPNEVRLKLYGMEKFRKHLVGAIRNAVNAGVADTIEFRQGDATEMTGEYDVIITNPPYGLRIHRKGAIERLYHSFARAAKRCMNQNSRLVIITAEHRVFANAAEEAGLQCTHERFVKYGGLLTKIMVFMI.

In terms of domain architecture, THUMP spans 73-183 (SAIPLLNHFS…DSELFVGVDT (111 aa)). Residues 199 to 203 (HPAHL), 230 to 232 (SGT), Glu-275, 303 to 304 (DA), and Asn-317 each bind S-adenosyl-L-methionine.

It belongs to the methyltransferase superfamily.

The protein resides in the cytoplasm. It catalyses the reaction guanosine(6) in tRNA + S-adenosyl-L-methionine = N(2)-methylguanosine(6) in tRNA + S-adenosyl-L-homocysteine + H(+). S-adenosyl-L-methionine-dependent methyltransferase that catalyzes the methylation of the guanosine nucleotide at position 6 (m2G6) in tRNA. The polypeptide is tRNA (guanine(6)-N2)-methyltransferase (Archaeoglobus fulgidus (strain ATCC 49558 / DSM 4304 / JCM 9628 / NBRC 100126 / VC-16)).